We begin with the raw amino-acid sequence, 909 residues long: Coatomer subunit beta'-3 (909 aa).

WD repeat units lie at residues Q13–S52, V55–V94, A97–Q136, G140–T180, A183–T224, G227–T266, Y269–D309, T351–G390, and Q461–D501. Residues E862–P909 form a disordered region. Positions E870–S892 are enriched in acidic residues.

The protein belongs to the WD repeat COPB2 family. Oligomeric complex that consists of at least the alpha, beta, beta', gamma, delta, epsilon and zeta subunits.

It is found in the cytoplasm. Its subcellular location is the golgi apparatus membrane. The protein resides in the cytoplasmic vesicle. The protein localises to the COPI-coated vesicle membrane. Its function is as follows. The coatomer is a cytosolic protein complex that binds to dilysine motifs and reversibly associates with Golgi non-clathrin-coated vesicles, which further mediate biosynthetic protein transport from the ER, via the Golgi up to the trans Golgi network. Coatomer complex is required for budding from Golgi membranes, and is essential for the retrograde Golgi-to-ER transport of dilysine-tagged proteins. The sequence is that of Coatomer subunit beta'-3 from Arabidopsis thaliana (Mouse-ear cress).